The primary structure comprises 122 residues: Protein C10 (122 aa).

The protein belongs to the UPF0456 family.

It is found in the cytoplasm. The sequence is that of Protein C10 from Danio rerio (Zebrafish).